Consider the following 428-residue polypeptide: uncharacterized protein (428 aa).

12 consecutive transmembrane segments (helical) span residues Leu14 to Phe34, Tyr55 to Ala75, Phe84 to Ser104, Trp107 to Phe127, Phe149 to Leu169, Ala182 to Ile202, Leu238 to Met258, Ser272 to Gly292, Thr302 to Glu322, Thr324 to Leu344, Phe361 to Ala381, and Thr392 to Pro412.

Belongs to the major facilitator superfamily.

The protein localises to the cell membrane. This is an uncharacterized protein from Bacillus subtilis (strain 168).